The following is a 660-amino-acid chain: MTNIIELPEVLANQIAAGEVVERPASVVKELVENAIDAKSSQITVEIEESGLKMIQVTDNGEGMSHEDLPLSLRRHATSKIKSQSDLFRIRTLGFRGEALPSVASISKITIKTATKEVTHGSLLIATGGEIETLEAISTPTGTKIKVENLFYNTPARLKYMKSLQAELAHIVDVVNRLSLAHPEVAFTLISDGRQLTQTSGTGDLRQAIAGIYGLNTTKKMLAISNADLDFEVSGYVSLPELTRANRNYMTILVNGRYIKNFLLNRAILDGYGSKLMVGRFPIVVIDIQIDPYLADVNVHPTKQEVRISKERELMALISTAISESLKEQDLIPDALENLAKSSTRHFSKPEQTQLPLQSRGLYYDPQKNDFFVKESAVSEKIPETDFYFGTVDNSVKVEKAELLPHSEEVIGPSSVKHASRPQNTFTETDHPNLDLKNRQKLSQMLTRLENEEQSVFPELDYFGQMHGTYLFAQGKDGLFIIDQHAAQERVKYEYYRDKIGEVDSSLQQLLVPYLFEFSGSDFINLQEKMALLNEVGIFLEVYGHNTFILREHPIWMKEEEIASGVYEMCDMLLLTNEVSIKTYRAELAIMMSCKRSIKANHSLDDYSARNLLLQLAQCQNPYNCPHGRPVLINFSKADMEKMFRRIQENHTSLRELGKY.

Belongs to the DNA mismatch repair MutL/HexB family.

Functionally, this protein is involved in the repair of mismatches in DNA. It is required for dam-dependent methyl-directed DNA mismatch repair. May act as a 'molecular matchmaker', a protein that promotes the formation of a stable complex between two or more DNA-binding proteins in an ATP-dependent manner without itself being part of a final effector complex. The sequence is that of DNA mismatch repair protein MutL from Streptococcus pyogenes serotype M3 (strain ATCC BAA-595 / MGAS315).